A 102-amino-acid chain; its full sequence is Small ribosomal subunit protein uS10 (102 aa).

The tract at residues 35–58 is disordered; that stretch reads SGPIPLPTKTLEIPSRKSPDGEGT.

Belongs to the universal ribosomal protein uS10 family. In terms of assembly, part of the 30S ribosomal subunit.

Involved in the binding of tRNA to the ribosomes. The chain is Small ribosomal subunit protein uS10 from Halorubrum lacusprofundi (strain ATCC 49239 / DSM 5036 / JCM 8891 / ACAM 34).